The chain runs to 166 residues: MRRVVTLVSKEQAEVGHRFRVVEVPDECRTCRLYPVCMGRLTPGRAYKIVEVRPYMGQRCKITDGEMVPVVVEEAPMIGLVPLNKALEGVVVTFEGECAGCEGCPQQVQVGEKIKIVRVLGRAKCRGGDFAIVEFYALGPPSPSKSGGATASRDPSRAPPSRPLSK.

Residues 140–166 (PPSPSKSGGATASRDPSRAPPSRPLSK) are disordered. A compositionally biased stretch (pro residues) spans 157 to 166 (RAPPSRPLSK).

This sequence belongs to the UPF0179 family.

This Pyrobaculum neutrophilum (strain DSM 2338 / JCM 9278 / NBRC 100436 / V24Sta) (Thermoproteus neutrophilus) protein is UPF0179 protein Tneu_1978.